The following is a 301-amino-acid chain: MTLTVDHAMNIAQVLTESLPYIQRFAGKTVVIKYGGNAMVDDDLKNSFSRDVVLMKLVGINPVVIHGGGPQIGRLLERVGKQSEFIQGMRVTDKETMDIVEMVLSGQVNKEIVNLINRHGGHAVGLTGKDGTLIHAEKLHLTQDRDDPTINIPEIIDMGHVGKVKQINTRIVDLLVQSDFIPVIAPIGVGENGQSYNINADLVAGKLAEALGAEKLILLTNTPGLLDKEGKLLTGLNAEQVQSLIADGTISDGMLPKIQCALEAVHAGVRSAHILDGRVEHAVILELFTDEGIGTLIRNRH.

Residues 68–69, arginine 90, and asparagine 197 contribute to the substrate site; that span reads GG.

The protein belongs to the acetylglutamate kinase family. ArgB subfamily.

The protein resides in the cytoplasm. It carries out the reaction N-acetyl-L-glutamate + ATP = N-acetyl-L-glutamyl 5-phosphate + ADP. It functions in the pathway amino-acid biosynthesis; L-arginine biosynthesis; N(2)-acetyl-L-ornithine from L-glutamate: step 2/4. Its function is as follows. Catalyzes the ATP-dependent phosphorylation of N-acetyl-L-glutamate. This chain is Acetylglutamate kinase, found in Nitrosococcus oceani (strain ATCC 19707 / BCRC 17464 / JCM 30415 / NCIMB 11848 / C-107).